Reading from the N-terminus, the 380-residue chain is Queuine tRNA-ribosyltransferase (380 aa).

Asp95 acts as the Proton acceptor in catalysis. Substrate contacts are provided by residues 95–99 (DSGGF), Asp149, Gln192, and Gly219. The segment at 250–256 (GVGSPDA) is RNA binding. Asp269 functions as the Nucleophile in the catalytic mechanism. An RNA binding; important for wobble base 34 recognition region spans residues 274 to 278 (TRIAR). Residues Cys307, Cys309, Cys312, and His338 each coordinate Zn(2+).

Belongs to the queuine tRNA-ribosyltransferase family. In terms of assembly, homodimer. Within each dimer, one monomer is responsible for RNA recognition and catalysis, while the other monomer binds to the replacement base PreQ1. Zn(2+) is required as a cofactor.

The catalysed reaction is 7-aminomethyl-7-carbaguanine + guanosine(34) in tRNA = 7-aminomethyl-7-carbaguanosine(34) in tRNA + guanine. It participates in tRNA modification; tRNA-queuosine biosynthesis. Catalyzes the base-exchange of a guanine (G) residue with the queuine precursor 7-aminomethyl-7-deazaguanine (PreQ1) at position 34 (anticodon wobble position) in tRNAs with GU(N) anticodons (tRNA-Asp, -Asn, -His and -Tyr). Catalysis occurs through a double-displacement mechanism. The nucleophile active site attacks the C1' of nucleotide 34 to detach the guanine base from the RNA, forming a covalent enzyme-RNA intermediate. The proton acceptor active site deprotonates the incoming PreQ1, allowing a nucleophilic attack on the C1' of the ribose to form the product. After dissociation, two additional enzymatic reactions on the tRNA convert PreQ1 to queuine (Q), resulting in the hypermodified nucleoside queuosine (7-(((4,5-cis-dihydroxy-2-cyclopenten-1-yl)amino)methyl)-7-deazaguanosine). In Pediococcus pentosaceus (strain ATCC 25745 / CCUG 21536 / LMG 10740 / 183-1w), this protein is Queuine tRNA-ribosyltransferase.